A 276-amino-acid chain; its full sequence is Diaminopimelate epimerase (276 aa).

Substrate is bound by residues asparagine 13, glutamine 46, and asparagine 66. Cysteine 75 functions as the Proton donor in the catalytic mechanism. Substrate is bound by residues 76 to 77 (GN), asparagine 159, asparagine 192, and 210 to 211 (ER). Residue cysteine 219 is the Proton acceptor of the active site. Residue 220 to 221 (GT) coordinates substrate.

The protein belongs to the diaminopimelate epimerase family. Homodimer.

The protein localises to the cytoplasm. It catalyses the reaction (2S,6S)-2,6-diaminopimelate = meso-2,6-diaminopimelate. Its pathway is amino-acid biosynthesis; L-lysine biosynthesis via DAP pathway; DL-2,6-diaminopimelate from LL-2,6-diaminopimelate: step 1/1. Functionally, catalyzes the stereoinversion of LL-2,6-diaminopimelate (L,L-DAP) to meso-diaminopimelate (meso-DAP), a precursor of L-lysine and an essential component of the bacterial peptidoglycan. The protein is Diaminopimelate epimerase of Tolumonas auensis (strain DSM 9187 / NBRC 110442 / TA 4).